The chain runs to 101 residues: NADH-quinone oxidoreductase subunit K (101 aa).

Transmembrane regions (helical) follow at residues 4 to 24, 30 to 50, and 61 to 81; these read LPHY…GIFV, IVIL…LVAF, and IFAM…LAIL.

Belongs to the complex I subunit 4L family. In terms of assembly, NDH-1 is composed of 14 different subunits. Subunits NuoA, H, J, K, L, M, N constitute the membrane sector of the complex.

It is found in the cell inner membrane. The catalysed reaction is a quinone + NADH + 5 H(+)(in) = a quinol + NAD(+) + 4 H(+)(out). Functionally, NDH-1 shuttles electrons from NADH, via FMN and iron-sulfur (Fe-S) centers, to quinones in the respiratory chain. The immediate electron acceptor for the enzyme in this species is believed to be ubiquinone. Couples the redox reaction to proton translocation (for every two electrons transferred, four hydrogen ions are translocated across the cytoplasmic membrane), and thus conserves the redox energy in a proton gradient. This is NADH-quinone oxidoreductase subunit K from Caulobacter vibrioides (strain ATCC 19089 / CIP 103742 / CB 15) (Caulobacter crescentus).